The sequence spans 173 residues: Protein SUGARY ENHANCER 1 (173 aa).

A disordered region spans residues 1–31 (MIRPAPWVGAGHRGRGGEAGACTESLGSESG).

It belongs to the fantastic four family.

Functionally, involved in starch metabolism in endosperm. Acts as a modifier of SUGARY1 (SU1), an isoamylase starch-debranching enzyme involved in amylopectin biosynthesis in endosperm. The polypeptide is Protein SUGARY ENHANCER 1 (Zea mays (Maize)).